The chain runs to 300 residues: N-acetylmannosamine kinase (300 aa).

ATP is bound by residues 5 to 12 (ALDIGGTK) and 132 to 139 (GVGGGIVL). His-156, Cys-166, Cys-168, and Cys-173 together coordinate Zn(2+).

Belongs to the ROK (NagC/XylR) family. NanK subfamily. In terms of assembly, homodimer.

It catalyses the reaction an N-acyl-D-mannosamine + ATP = an N-acyl-D-mannosamine 6-phosphate + ADP + H(+). It participates in amino-sugar metabolism; N-acetylneuraminate degradation; D-fructose 6-phosphate from N-acetylneuraminate: step 2/5. Functionally, catalyzes the phosphorylation of N-acetylmannosamine (ManNAc) to ManNAc-6-P. This chain is N-acetylmannosamine kinase, found in Haemophilus influenzae (strain PittGG).